We begin with the raw amino-acid sequence, 190 residues long: UPF0200 protein MTH_434 (190 aa).

10–17 (GMPGAGKG) lines the ATP pocket.

The protein belongs to the UPF0200 family.

The chain is UPF0200 protein MTH_434 from Methanothermobacter thermautotrophicus (strain ATCC 29096 / DSM 1053 / JCM 10044 / NBRC 100330 / Delta H) (Methanobacterium thermoautotrophicum).